A 1085-amino-acid chain; its full sequence is Cell wall protein IFF6 (1085 aa).

The first 19 residues, 1–19 (MLLKQIFLPFFVLFNAINA), serve as a signal peptide directing secretion. Positions 339 to 1060 (PSPGTDESSS…SSNSATIPEQ (722 aa)) are disordered. The segment covering 342–528 (GTDESSSLSS…QSSSGTGQSS (187 aa)) has biased composition (low complexity). Acidic residues predominate over residues 529–538 (TEDEPIDSTE). Over residues 539-828 (SDTSSATDSS…TVTNTATNTG (290 aa)) the composition is skewed to low complexity. N-linked (GlcNAc...) asparagine glycans are attached at residues Asn-659, Asn-782, Asn-854, Asn-860, Asn-864, Asn-874, Asn-882, Asn-886, Asn-890, Asn-896, Asn-900, Asn-910, Asn-924, Asn-932, Asn-938, Asn-952, Asn-960, Asn-964, Asn-968, Asn-976, Asn-980, Asn-992, Asn-996, Asn-1008, and Asn-1016. Positions 847-1010 (NNGGGSNNGS…GSGSGSGNGS (164 aa)) are enriched in gly residues. Over residues 1018 to 1028 (SGSGSGSGNGQ) the composition is skewed to gly residues. Low complexity predominate over residues 1031-1052 (GIITSSIGQPGSSTSTQGPSSS). Asn-1062 is lipidated: GPI-anchor amidated asparagine. A propeptide spans 1063–1085 (SGNHIKFTLFNGLLIGLVPIVFM) (removed in mature form).

Belongs to the HYR1/IFF family. Post-translationally, the GPI-anchor is attached to the protein in the endoplasmic reticulum and serves to target the protein to the cell surface. There, the glucosamine-inositol phospholipid moiety is cleaved off and the GPI-modified mannoprotein is covalently attached via its lipidless GPI glycan remnant to the 1,6-beta-glucan of the outer cell wall layer.

Its subcellular location is the secreted. The protein localises to the cell wall. The protein resides in the membrane. GPI-anchored cell wall protein involved in cell wall organization, hyphal growth, as well as in host-fungal interaction and virulence. The protein is Cell wall protein IFF6 (IFF6) of Candida albicans (strain SC5314 / ATCC MYA-2876) (Yeast).